Reading from the N-terminus, the 155-residue chain is FUN14 domain-containing protein 1 (155 aa).

Topologically, residues 1–47 (MATRNPPPQDYESDDDSYEVLDLTEYARRHQWWNRVFGHSSGPMVEK) are cytoplasmic. The residue at position 13 (Ser-13) is a Phosphoserine; by CK2. At Ser-17 the chain carries Phosphoserine; by ULK1. Phosphotyrosine; by SRC is present on Tyr-18. The short motif at 18-21 (YEVL) is the YXXL element. Residues 48 to 68 (YSVATQIVMGGVTGWCAGFLF) form a helical membrane-spanning segment. The Mitochondrial intermembrane portion of the chain corresponds to 69-74 (QKVGKL). A helical membrane pass occupies residues 75-95 (AATAVGGGFLLLQIASHSGYV). At 96-133 (QIDWKRVEKDVNKAKRQIKKRANKAAPEINNLIEEATE) the chain is on the cytoplasmic side. Lys-119 is covalently cross-linked (Glycyl lysine isopeptide (Lys-Gly) (interchain with G-Cter in ubiquitin)). A helical membrane pass occupies residues 134 to 154 (FIKQNIVISSGFVGGFLLGLA). Ser-155 is a topological domain (mitochondrial intermembrane).

It belongs to the FUN14 family. As to quaternary structure, interacts (via YXXL motif) with MAP1 LC3 family proteins MAP1LC3A, MAP1LC3B and GABARAP. Interacts with DNM1L/DPR1. Interacts with GPX4. In terms of processing, phosphorylation at Ser-13 by CK2 and at Tyr-18 by SRC inhibits activation of mitophagy. Following hypoxia, dephosphorylated at Tyr-18, leading to interaction with MAP1 LC3 family proteins and triggering mitophagy. Dephosphorylation is mediated by PGAM5. Phosphorylated by ULK1 at Ser-17 which enhances FUNDC1 binding to LC3. Post-translationally, ubiquitinated on Lys-119. Deubiquitinated by USP19; leading to hypoxia-induced DRP1 oligomerization and GTPase activity. As to expression, widely expressed.

Its subcellular location is the mitochondrion outer membrane. In terms of biological role, integral mitochondrial outer-membrane protein that mediates the formation of mitochondria-associated endoplasmic reticulum membranes (MAMs). In turn, mediates angiogenesis and neoangiogenesis through interference with intracellular Ca(2+) communication and regulation of the vascular endothelial growth factor receptor KDR/VEGFR2 expression at both mRNA and protein levels. Also acts as an activator of hypoxia-induced mitophagy, an important mechanism for mitochondrial quality and homeostasis, by interacting with and recruiting LC3 protein family to mitochondria. Mechanistically, recruits DRP1 at ER-mitochondria contact sites leading to DRP1 oligomerization and GTPase activity to facilitate mitochondrial fission during hypoxia. Additionally, plays a role in hepatic ferroptosis by interacting directly with glutathione peroxidase/GPX4 to facilitate its recruitment into mitochondria through TOM/TIM complex where it is degraded by mitophagy. The sequence is that of FUN14 domain-containing protein 1 (FUNDC1) from Homo sapiens (Human).